The following is a 492-amino-acid chain: uncharacterized protein (492 aa).

12 consecutive transmembrane segments (helical) span residues 16–36 (FIAF…VMTM), 39–59 (VGPF…GVVL), 107–127 (SFNG…IPVV), 133–153 (IIIG…FISL), 162–182 (AIFY…ILGI), 210–230 (IIFI…LASI), 243–263 (FLIA…IISG), 291–311 (LVGG…NSLA), 350–370 (VLIS…IPFL), 394–414 (MAAA…FMIF), 429–449 (VSYV…LFPF), and 454–474 (VFNT…VGFF).

To M.genitalium MG225.

It localises to the cell membrane. This is an uncharacterized protein from Mycoplasma genitalium (strain ATCC 33530 / DSM 19775 / NCTC 10195 / G37) (Mycoplasmoides genitalium).